A 354-amino-acid polypeptide reads, in one-letter code: Anthranilate phosphoribosyltransferase (354 aa).

5-phospho-alpha-D-ribose 1-diphosphate is bound by residues glycine 94, 97 to 98, threonine 102, 104 to 107, 122 to 130, and serine 134; these read GD, NIST, and KHGNRAASS. Glycine 94 lines the anthranilate pocket. A Mg(2+)-binding site is contributed by serine 106. Asparagine 125 contacts anthranilate. Arginine 180 is an anthranilate binding site. Positions 238 and 239 each coordinate Mg(2+).

The protein belongs to the anthranilate phosphoribosyltransferase family. As to quaternary structure, homodimer. Mg(2+) is required as a cofactor.

The enzyme catalyses N-(5-phospho-beta-D-ribosyl)anthranilate + diphosphate = 5-phospho-alpha-D-ribose 1-diphosphate + anthranilate. The protein operates within amino-acid biosynthesis; L-tryptophan biosynthesis; L-tryptophan from chorismate: step 2/5. Its function is as follows. Catalyzes the transfer of the phosphoribosyl group of 5-phosphorylribose-1-pyrophosphate (PRPP) to anthranilate to yield N-(5'-phosphoribosyl)-anthranilate (PRA). In Streptomyces avermitilis (strain ATCC 31267 / DSM 46492 / JCM 5070 / NBRC 14893 / NCIMB 12804 / NRRL 8165 / MA-4680), this protein is Anthranilate phosphoribosyltransferase.